A 359-amino-acid polypeptide reads, in one-letter code: DNA ligase (359 aa).

ATP contacts are provided by residues 32-35 (EIKY), arginine 39, 55-57 (RVS), and glutamate 93. The N6-AMP-lysine intermediate role is filled by lysine 34. Residue glutamate 217 participates in a divalent metal cation binding. ATP is bound by residues lysine 232 and lysine 238.

The protein belongs to the ATP-dependent DNA ligase family. A divalent metal cation serves as cofactor.

It carries out the reaction ATP + (deoxyribonucleotide)n-3'-hydroxyl + 5'-phospho-(deoxyribonucleotide)m = (deoxyribonucleotide)n+m + AMP + diphosphate.. DNA ligase that seals nicks in double-stranded DNA during DNA replication, DNA recombination and DNA repair in an ATP-dependent reaction. Binds specifically to DNA nicks containing a 3'-OH and a 5'-phosphate group. This is DNA ligase from Escherichia phage T7 (Bacteriophage T7).